The sequence spans 413 residues: Arginine biosynthesis bifunctional protein ArgJ (413 aa).

The substrate site is built by T154, K180, T191, E277, N408, and T413. T191 serves as the catalytic Nucleophile.

The protein belongs to the ArgJ family. As to quaternary structure, heterotetramer of two alpha and two beta chains.

It is found in the cytoplasm. It carries out the reaction N(2)-acetyl-L-ornithine + L-glutamate = N-acetyl-L-glutamate + L-ornithine. It catalyses the reaction L-glutamate + acetyl-CoA = N-acetyl-L-glutamate + CoA + H(+). It participates in amino-acid biosynthesis; L-arginine biosynthesis; L-ornithine and N-acetyl-L-glutamate from L-glutamate and N(2)-acetyl-L-ornithine (cyclic): step 1/1. The protein operates within amino-acid biosynthesis; L-arginine biosynthesis; N(2)-acetyl-L-ornithine from L-glutamate: step 1/4. Catalyzes two activities which are involved in the cyclic version of arginine biosynthesis: the synthesis of N-acetylglutamate from glutamate and acetyl-CoA as the acetyl donor, and of ornithine by transacetylation between N(2)-acetylornithine and glutamate. In Synechocystis sp. (strain ATCC 27184 / PCC 6803 / Kazusa), this protein is Arginine biosynthesis bifunctional protein ArgJ.